The primary structure comprises 107 residues: Phosphoribosyl-ATP pyrophosphatase (107 aa).

It belongs to the PRA-PH family.

It is found in the cytoplasm. It catalyses the reaction 1-(5-phospho-beta-D-ribosyl)-ATP + H2O = 1-(5-phospho-beta-D-ribosyl)-5'-AMP + diphosphate + H(+). Its pathway is amino-acid biosynthesis; L-histidine biosynthesis; L-histidine from 5-phospho-alpha-D-ribose 1-diphosphate: step 2/9. In Bacillus cereus (strain ATCC 14579 / DSM 31 / CCUG 7414 / JCM 2152 / NBRC 15305 / NCIMB 9373 / NCTC 2599 / NRRL B-3711), this protein is Phosphoribosyl-ATP pyrophosphatase.